Reading from the N-terminus, the 509-residue chain is Hyaluronidase PH-20 (509 aa).

The first 35 residues, 1-35, serve as a signal peptide directing secretion; the sequence is MGVLKFKHIFFRSFVKSSGVSQIVFTFLLIPCCLT. Intrachain disulfides connect C60/C351 and C224/C238. N-linked (GlcNAc...) asparagine glycosylation is present at N82. E148 (proton donor) is an active-site residue. N-linked (GlcNAc...) asparagine glycans are attached at residues N166, N235, N254, and N368. Disulfide bonds link C376–C387, C381–C435, and C437–C464. N393 carries an N-linked (GlcNAc...) asparagine glycan. A lipid anchor (GPI-anchor amidated serine) is attached at S490. Positions 491–509 are cleaved as a propeptide — removed in mature form; the sequence is ATMFIVSILFLIISSVASL.

Belongs to the glycosyl hydrolase 56 family. In terms of processing, N-glycosylated. In terms of tissue distribution, testis.

It localises to the cell membrane. The catalysed reaction is Random hydrolysis of (1-&gt;4)-linkages between N-acetyl-beta-D-glucosamine and D-glucuronate residues in hyaluronate.. Functionally, involved in sperm-egg adhesion. Upon fertilization sperm must first penetrate a layer of cumulus cells that surrounds the egg before reaching the zona pellucida. The cumulus cells are embedded in a matrix containing hyaluronic acid which is formed prior to ovulation. This protein aids in penetrating the layer of cumulus cells by digesting hyaluronic acid. This is Hyaluronidase PH-20 (SPAM1) from Homo sapiens (Human).